The following is a 70-amino-acid chain: uncharacterized protein (70 aa).

A helical membrane pass occupies residues 15-37 (LLVSSISESAVALIIITIRILFS).

It is found in the membrane. This is an uncharacterized protein from Saccharomyces cerevisiae (strain ATCC 204508 / S288c) (Baker's yeast).